The sequence spans 570 residues: Sulfite reductase [NADPH] hemoprotein beta-component (570 aa).

[4Fe-4S] cluster is bound by residues Cys-434, Cys-440, Cys-479, and Cys-483. Cys-483 provides a ligand contact to siroheme.

This sequence belongs to the nitrite and sulfite reductase 4Fe-4S domain family. In terms of assembly, alpha(8)-beta(8). The alpha component is a flavoprotein, the beta component is a hemoprotein. The cofactor is siroheme. [4Fe-4S] cluster is required as a cofactor.

The enzyme catalyses hydrogen sulfide + 3 NADP(+) + 3 H2O = sulfite + 3 NADPH + 4 H(+). It functions in the pathway sulfur metabolism; hydrogen sulfide biosynthesis; hydrogen sulfide from sulfite (NADPH route): step 1/1. Functionally, component of the sulfite reductase complex that catalyzes the 6-electron reduction of sulfite to sulfide. This is one of several activities required for the biosynthesis of L-cysteine from sulfate. In Escherichia coli (strain SMS-3-5 / SECEC), this protein is Sulfite reductase [NADPH] hemoprotein beta-component.